Reading from the N-terminus, the 1705-residue chain is Receptor-type tyrosine-protein phosphatase V (1705 aa).

Residues 1–18 (MRPLILLAALLWLQDSLA) form the signal peptide. The Extracellular portion of the chain corresponds to 19 to 1077 (QEDVCSSLDG…QASISLVAMP (1059 aa)). The interval 24–44 (SSLDGSPDRQGGGPPLSVSVT) is disordered. Fibronectin type-III domains are found at residues 37-129 (PPLS…TAPT), 130-222 (VVRG…VPPD), 218-305 (PVPP…EWTY), 306-388 (PSYP…SIWL), 393-454 (ARPM…HYRV), 475-569 (PPQS…APPT), 565-654 (PAPP…TGWT), 655-749 (PPSA…TPNE), 744-831 (PLTP…VLSV), and 832-926 (EPGP…SAEV). N-linked (GlcNAc...) asparagine glycosylation is found at Asn-74, Asn-89, Asn-117, Asn-174, Asn-239, Asn-259, Asn-299, Asn-345, Asn-431, Asn-551, Asn-570, Asn-620, Asn-649, Asn-663, and Asn-737. 4 N-linked (GlcNAc...) asparagine glycosylation sites follow: Asn-851, Asn-882, Asn-970, and Asn-982. Residues 1078-1100 (LTVMMGTVVGCIIIVCAVLCLLC) traverse the membrane as a helical segment. Residues 1101-1705 (RRGLKGPRSE…LRNRLPRARK (605 aa)) are Cytoplasmic-facing. Tyrosine-protein phosphatase domains follow at residues 1150–1409 (FFQE…LLNK) and 1427–1695 (NFAQ…LNSA). Residues Asp-1316, 1350–1356 (CSAGVGR), and Gln-1394 each bind substrate. Catalysis depends on Cys-1350, which acts as the Phosphocysteine intermediate.

Belongs to the protein-tyrosine phosphatase family. Receptor class 3 subfamily.

The protein resides in the membrane. It catalyses the reaction O-phospho-L-tyrosyl-[protein] + H2O = L-tyrosyl-[protein] + phosphate. Protein tyrosine phosphatase that acts as a regulator of energy metabolism by mediating dephosphorylation of insulin receptor (Insr). Prevents decarboxylation of osteocalcin (Bglap and Bglap2) via an indirect mechanism: dephosphorylation of insulin receptor prevents insulin signaling-dependent decarboxylation of osteocalcin, preventing the hormone activity of osteocalcin. May play a role in the maintenance of pluripotency. This chain is Receptor-type tyrosine-protein phosphatase V (Ptprv), found in Mus musculus (Mouse).